We begin with the raw amino-acid sequence, 630 residues long: Amino acid transporter heavy chain SLC3A2 (630 aa).

N-acetylmethionine is present on M1. An N-acetylserine modification is found at E2. Phosphoserine is present on E2. Residues 15-39 (IPRQLPGSHSEAGVQGLSAGDDSEL) form a disordered region. The Cytoplasmic portion of the chain corresponds to 102-184 (MSQDTEVDMK…SPGWVRTRWA (83 aa)). S103 carries the phosphoserine modification. T106 is subject to Phosphothreonine. S134 carries the phosphoserine modification. K147 participates in a covalent cross-link: Glycyl lysine isopeptide (Lys-Gly) (interchain with G-Cter in ubiquitin). S165 bears the Phosphoserine mark. K166 is covalently cross-linked (Glycyl lysine isopeptide (Lys-Gly) (interchain with G-Cter in SUMO2)). A helical; Signal-anchor for type II membrane protein membrane pass occupies residues 185 to 205 (LLLLFWLGWLGMLAGAVVIIV). Topologically, residues 206 to 630 (RAPRCRELPA…GLLLRFPYAA (425 aa)) are extracellular. Residues N365 and N381 are each glycosylated (N-linked (GlcNAc...) asparagine). S406, S408, and S410 each carry phosphoserine. A glycan (N-linked (GlcNAc...) (complex) asparagine) is linked at N424. N-linked (GlcNAc...) asparagine glycosylation is present at N506. 2 positions are modified to phosphoserine: S527 and S531.

Disulfide-linked heterodimer with a non-glycosylated catalytic light subunit (SLC7A5, SLC7A6, SLC7A7, SLC7A8, SLC7A10 or SLC7A11). Interacts with TLCD3A/CT120. Interacts with ICAM1. Constitutively and specifically associates with beta-1 integrins (alpha-2/beta-1, alpha-3/beta-1, alpha-5/beta-1 and alpha-6/beta-1), but minimally with alpha-4/beta-1. Interacts with LAPTM4B; recruits SLC3A2 and SLC7A5/LAT1 to lysosomes to promote leucine uptake into these organelles and is required for mTORC1 activation. As to quaternary structure, (Microbial infection) Interacts with hepatitis C virus/HCV envelope glycoprotein E2; the interaction may facilitate viral entry into host cell. N-glycosylated; N-glycosylation is crucial for trafficking and stability of SLC3A2 to the plasma membrane. Post-translationally, phosphorylation on Ser-406; Ser-408 or Ser-410 and on Ser-527 or Ser-531 by ecto-protein kinases favors heterotypic cell-cell interactions. Expressed ubiquitously in all tissues tested with highest levels detected in kidney, placenta and testis and weakest level in thymus. During gestation, expression in the placenta was significantly stronger at full-term than at the mid-trimester stage. Expressed in HUVECS and at low levels in resting peripheral blood T-lymphocytes and quiescent fibroblasts. Also expressed in fetal liver and in the astrocytic process of primary astrocytic gliomas. Expressed in retinal endothelial cells and in the intestinal epithelial cell line C2BBe1.

It is found in the apical cell membrane. The protein localises to the cell membrane. It localises to the cell junction. Its subcellular location is the lysosome membrane. The protein resides in the melanosome. It is found in the basolateral cell membrane. Its function is as follows. Acts as a chaperone that facilitates biogenesis and trafficking of functional transporters heterodimers to the plasma membrane. Forms heterodimer with SLC7 family transporters (SLC7A5, SLC7A6, SLC7A7, SLC7A8, SLC7A10 and SLC7A11), a group of amino-acid antiporters. Heterodimers function as amino acids exchangers, the specificity of the substrate depending on the SLC7A subunit. Heterodimers SLC3A2/SLC7A6 or SLC3A2/SLC7A7 mediate the uptake of dibasic amino acids. Heterodimer SLC3A2/SLC7A11 functions as an antiporter by mediating the exchange of extracellular anionic L-cystine and intracellular L-glutamate across the cellular plasma membrane. SLC3A2/SLC7A10 translocates small neutral L- and D-amino acids across the plasma membrane. SLC3A2/SLC75 or SLC3A2/SLC7A8 translocates neutral amino acids with broad specificity, thyroid hormones and L-DOPA. SLC3A2 is essential for plasma membrane localization, stability, and the transport activity of SLC7A5 and SLC7A8. When associated with LAPTM4B, the heterodimer SLC7A5 is recruited to lysosomes to promote leucine uptake into these organelles, and thereby mediates mTORC1 activation. Modulates integrin-related signaling and is essential for integrin-dependent cell spreading, migration and tumor progression. In terms of biological role, (Microbial infection) In case of hepatitis C virus/HCV infection, the complex formed by SLC3A2 and SLC7A5/LAT1 plays a role in HCV propagation by facilitating viral entry into host cell and increasing L-leucine uptake-mediated mTORC1 signaling activation, thereby contributing to HCV-mediated pathogenesis. Functionally, (Microbial infection) Acts as a receptor for malaria parasite Plasmodium vivax (Thai isolate) in immature red blood cells. The polypeptide is Amino acid transporter heavy chain SLC3A2 (Homo sapiens (Human)).